The following is a 484-amino-acid chain: Glutamyl-tRNA(Gln) amidotransferase subunit A (484 aa).

Residues Lys-74 and Ser-149 each act as charge relay system in the active site. Residue Ser-173 is the Acyl-ester intermediate of the active site.

Belongs to the amidase family. GatA subfamily. Heterotrimer of A, B and C subunits.

The enzyme catalyses L-glutamyl-tRNA(Gln) + L-glutamine + ATP + H2O = L-glutaminyl-tRNA(Gln) + L-glutamate + ADP + phosphate + H(+). Its function is as follows. Allows the formation of correctly charged Gln-tRNA(Gln) through the transamidation of misacylated Glu-tRNA(Gln) in organisms which lack glutaminyl-tRNA synthetase. The reaction takes place in the presence of glutamine and ATP through an activated gamma-phospho-Glu-tRNA(Gln). The sequence is that of Glutamyl-tRNA(Gln) amidotransferase subunit A from Prochlorococcus marinus subsp. pastoris (strain CCMP1986 / NIES-2087 / MED4).